We begin with the raw amino-acid sequence, 211 residues long: FMN-dependent NADH:quinone oxidoreductase 3 (211 aa).

Position 17 to 19 (17 to 19 (SFS)) interacts with FMN.

This sequence belongs to the azoreductase type 1 family. In terms of assembly, homodimer. The cofactor is FMN.

It catalyses the reaction 2 a quinone + NADH + H(+) = 2 a 1,4-benzosemiquinone + NAD(+). It carries out the reaction N,N-dimethyl-1,4-phenylenediamine + anthranilate + 2 NAD(+) = 2-(4-dimethylaminophenyl)diazenylbenzoate + 2 NADH + 2 H(+). Functionally, quinone reductase that provides resistance to thiol-specific stress caused by electrophilic quinones. Its function is as follows. Also exhibits azoreductase activity. Catalyzes the reductive cleavage of the azo bond in aromatic azo compounds to the corresponding amines. The protein is FMN-dependent NADH:quinone oxidoreductase 3 of Halalkalibacterium halodurans (strain ATCC BAA-125 / DSM 18197 / FERM 7344 / JCM 9153 / C-125) (Bacillus halodurans).